A 254-amino-acid chain; its full sequence is 5-oxoprolinase subunit A (254 aa).

Belongs to the LamB/PxpA family. As to quaternary structure, forms a complex composed of PxpA, PxpB and PxpC.

It catalyses the reaction 5-oxo-L-proline + ATP + 2 H2O = L-glutamate + ADP + phosphate + H(+). In terms of biological role, catalyzes the cleavage of 5-oxoproline to form L-glutamate coupled to the hydrolysis of ATP to ADP and inorganic phosphate. This is 5-oxoprolinase subunit A from Acinetobacter baylyi (strain ATCC 33305 / BD413 / ADP1).